Consider the following 201-residue polypeptide: MAWMLLLILIMVHPGSCALWVSQPPEIRTLEGSSAFLPCSFNASQGRLAIGSVTWFRDEVVPGKEVRNETPEFRGRLAPLASSRFLHDHQAELHIRDVRGHDASIYVCRVEVLGLGVGTGNGTRLVVEKEHPQLGAGTVLLLRAGFYAVSFLSVAVGSTVYYQGKCLTWKGPRRQLPAVVPAPLPPPCGSSAQLLPPVPGG.

Positions Met1–Ala18 are cleaved as a signal peptide. An Ig-like domain is found at Leu19–Val126. Topologically, residues Leu19 to Gly135 are extracellular. Cys39 and Cys108 are oxidised to a cystine. N-linked (GlcNAc...) asparagine glycans are attached at residues Asn42 and Asn121. Residues Ala136–Val156 form a helical membrane-spanning segment. Topologically, residues Gly157–Gly201 are cytoplasmic.

Belongs to the natural cytotoxicity receptor (NCR) family. As to quaternary structure, homodimer in the unliganted form. Interacts with CD3Z. Interacts with and is activated by binding to NCR3LG1. Interacts with and is activated by binding to BAG6. Interacts with and is inhibited by binding to LGALS3.

The protein resides in the cell membrane. In terms of biological role, cell membrane receptor of natural killer/NK cells that is activated by binding of extracellular ligands including BAG6 and NCR3LG1. Stimulates NK cells cytotoxicity toward neighboring cells producing these ligands. It controls, for instance, NK cells cytotoxicity against tumor cells. Engagement of NCR3 by BAG6 also promotes myeloid dendritic cells (DC) maturation, both through killing DCs that did not acquire a mature phenotype, and inducing the release by NK cells of TNFA and IFNG that promote DC maturation. In Pan troglodytes (Chimpanzee), this protein is Natural cytotoxicity triggering receptor 3 (NCR3).